Here is a 368-residue protein sequence, read N- to C-terminus: Zinc finger protein 24 (368 aa).

Lysine 22 participates in a covalent cross-link: Glycyl lysine isopeptide (Lys-Gly) (interchain with G-Cter in SUMO2). Lysine 27 participates in a covalent cross-link: Glycyl lysine isopeptide (Lys-Gly) (interchain with G-Cter in SUMO1); alternate. A Glycyl lysine isopeptide (Lys-Gly) (interchain with G-Cter in SUMO2); alternate cross-link involves residue lysine 27. The region spanning 52-134 (RQRFRQFGYQ…TVLEDLESEL (83 aa)) is the SCAN box domain. A phosphoserine mark is found at serine 132 and serine 142. Residues lysine 147, lysine 177, and lysine 236 each participate in a glycyl lysine isopeptide (Lys-Gly) (interchain with G-Cter in SUMO2) cross-link. The C2H2-type 1 zinc finger occupies 251–273 (HICDECGKHFSQGSALILHQRIH). A necessary and sufficient for nuclear localization region spans residues 251 to 301 (HICDECGKHFSQGSALILHQRIHSGEKPYGCVECGKAFSRSSILVQHQRVH). Serine 274 carries the post-translational modification Phosphoserine. Residues lysine 277 and lysine 286 each participate in a glycyl lysine isopeptide (Lys-Gly) (interchain with G-Cter in SUMO2) cross-link. 3 C2H2-type zinc fingers span residues 279–301 (YGCV…QRVH), 307–329 (YKCL…QRIH), and 335–357 (YECV…XXXH). Serine 292 carries the phosphoserine modification. Phosphotyrosine is present on tyrosine 335. Residues lysine 361 and lysine 367 each participate in a glycyl lysine isopeptide (Lys-Gly) (interchain with G-Cter in SUMO2) cross-link.

It belongs to the krueppel C2H2-type zinc-finger protein family. Sumoylated.

It is found in the nucleus. Transcription factor required for myelination of differentiated oligodendrocytes. Required for the conversion of oligodendrocytes from the premyelinating to the myelinating state. In the developing central nervous system (CNS), involved in the maintenance in the progenitor stage by promoting the cell cycle. Specifically binds to the 5'-TCAT-3' DNA sequence. Has transcription repressor activity in vitro. This Pan paniscus (Pygmy chimpanzee) protein is Zinc finger protein 24 (ZNF24).